The chain runs to 507 residues: MDVPAFRERLLRLAPKDPLVLAVSGGGDSVALALLVKEAGRQAVVAHLDHGLRPESPLDQAFVRALAERLGFPFFTERVEVARIAQARGENLEAVAREVRYAFLHRVAREVGARAILTAHTLDDQAETVLLQLLQGTARATGIREREGIVVRPLLAHTREELRAYLRARGEAWREDPTNQDPALDRNFLRLFVFPLLEERFPAAKRALARFAEARAEEEGVLERQAEARLLPDPRFFVPAFRAAPLLEAPLAVRRRALRRLLEKLGLRPEARLVLLLEEALRGRPQTLPGGVLARRKGGTLFLLPPRPRLPLPPGFRRPAPGDYLERPSGRKRLVDFLAEKGVPRELKPLWPVRAEGNRVVEVLGLYPPPPEEAHMAEALAEAASAFREGEVPVGAVLVLPGRVLRAHNRVEGLRDPTAHAEMLLLREAGPEARGGRLYVTLEPCLMCHHALAQAGVEVVYGAENLKEGALTRFGLPTRARGGVRERECAKLLRDFFARLREGCRSG.

24 to 29 serves as a coordination point for ATP; the sequence is SGGGDS. One can recognise a CMP/dCMP-type deaminase domain in the interval 370–500; the sequence is PPEEAHMAEA…KLLRDFFARL (131 aa). 3 residues coordinate Zn(2+): H420, C445, and C448.

Belongs to the tRNA(Ile)-lysidine synthase family.

It localises to the cytoplasm. The catalysed reaction is cytidine(34) in tRNA(Ile2) + L-lysine + ATP = lysidine(34) in tRNA(Ile2) + AMP + diphosphate + H(+). Functionally, ligates lysine onto the cytidine present at position 34 of the AUA codon-specific tRNA(Ile) that contains the anticodon CAU, in an ATP-dependent manner. Cytidine is converted to lysidine, thus changing the amino acid specificity of the tRNA from methionine to isoleucine. In Thermus thermophilus (strain ATCC 27634 / DSM 579 / HB8), this protein is tRNA(Ile)-lysidine synthase (tilS).